The following is a 208-amino-acid chain: Large ribosomal subunit protein bL25 (208 aa).

Residues 185-195 (DLEEETGEAEG) show a composition bias toward acidic residues. The segment at 185–208 (DLEEETGEAEGETAAAPAEEGAES) is disordered. Residues 196–208 (ETAAAPAEEGAES) are compositionally biased toward low complexity.

The protein belongs to the bacterial ribosomal protein bL25 family. CTC subfamily. As to quaternary structure, part of the 50S ribosomal subunit; part of the 5S rRNA/L5/L18/L25 subcomplex. Contacts the 5S rRNA. Binds to the 5S rRNA independently of L5 and L18.

In terms of biological role, this is one of the proteins that binds to the 5S RNA in the ribosome where it forms part of the central protuberance. The protein is Large ribosomal subunit protein bL25 of Rhodococcus opacus (strain B4).